A 412-amino-acid polypeptide reads, in one-letter code: Alanyl-tRNA editing protein Aarsd1 (412 aa).

The Zn(2+) site is built by His109 and His113. Ser174 is modified (phosphoserine). Zn(2+) contacts are provided by Cys209 and His213.

Belongs to the class-II aminoacyl-tRNA synthetase family. Alax-L subfamily. Requires Zn(2+) as cofactor.

It localises to the cytoplasm. In terms of biological role, functions in trans to edit the amino acid moiety from incorrectly charged Ser-tRNA(Ala). The chain is Alanyl-tRNA editing protein Aarsd1 (Aarsd1) from Mus musculus (Mouse).